The following is a 510-amino-acid chain: Acyl-CoA desaturase 1 (510 aa).

Residues 1–112 lie on the Cytoplasmic side of the membrane; the sequence is MPTSGTTIEL…TLNNWHQHLN (112 aa). Residues 113–133 form a helical membrane-spanning segment; sequence WLNMVLVCGMPMIGWYFALSG. Over 134–138 the chain is Lumenal; sequence KVPLH. The chain crosses the membrane as a helical span at residues 139-159; it reads LNVFLFSVFYYAVGGVSITAG. The Cytoplasmic segment spans residues 160 to 255; the sequence is YHRLWSHRSY…DWTIRFQHRH (96 aa). Positions 161, 166, 198, 201, and 202 each coordinate Fe cation. A Histidine box-1 motif is present at residues 161-166; that stretch reads HRLWSH. A Histidine box-2 motif is present at residues 198–202; it reads HRIHH. Residues 256-276 form a helical membrane-spanning segment; that stretch reads YILLMLLTAFVIPTLICGYFF. At 277 to 280 the chain is on the lumenal side; it reads NDYM. The helical transmembrane segment at 281-301 threads the bilayer; sequence GGLIYAGFIRVFVIQQATFCI. The Cytoplasmic portion of the chain corresponds to 302–510; sequence NSLAHYIGTQ…GEIYETGKFF (209 aa). Residues His-306, His-335, His-338, and His-339 each contribute to the Fe cation site. Positions 335-339 match the Histidine box-3 motif; it reads HNFHH. A Cytochrome b5 heme-binding domain is found at 409-487; the sequence is LPMWDKQTFL…LADMRVAVIK (79 aa). Positions 444 and 470 each coordinate heme.

It belongs to the fatty acid desaturase type 1 family. Fe(2+) is required as a cofactor.

It is found in the endoplasmic reticulum membrane. It carries out the reaction octadecanoyl-CoA + 2 Fe(II)-[cytochrome b5] + O2 + 2 H(+) = (9Z)-octadecenoyl-CoA + 2 Fe(III)-[cytochrome b5] + 2 H2O. The enzyme catalyses hexadecanoyl-CoA + 2 Fe(II)-[cytochrome b5] + O2 + 2 H(+) = (9Z)-hexadecenoyl-CoA + 2 Fe(III)-[cytochrome b5] + 2 H2O. Functionally, stearoyl-CoA desaturase that utilizes O(2) and electrons from reduced cytochrome b5 to introduce the first double bond into saturated fatty acyl-CoA substrates. Catalyzes the insertion of a cis double bond at the delta-9 position into fatty acyl-CoA substrates including palmitoyl-CoA and stearoyl-CoA. Required for the biosynthesis of membrane phospholipids, cholesterol esters and triglycerides. Regulates fatty acid desaturation, that is, the ratio of unsaturated versus saturated fatty acyl chains, by competing with the acyltransferase STC1 for the common substrate C16:0-CoA. SCT1 sequesters C16:0-CoA into lipids, thereby shielding it from desaturation by OLE1. This Saccharomyces cerevisiae (strain ATCC 204508 / S288c) (Baker's yeast) protein is Acyl-CoA desaturase 1 (OLE1).